We begin with the raw amino-acid sequence, 237 residues long: CD99 antigen-like protein 2 (237 aa).

Residues 1–25 (MVARLTAFLVCLVFSLATLVQRGYG) form the signal peptide. Topologically, residues 26–161 (DTDGFNLEDA…PGSGISTETG (136 aa)) are extracellular. Residues 47-157 (DHFSTTTRRP…SNDDPGSGIS (111 aa)) form a disordered region. Low complexity-rich tracts occupy residues 51–66 (TTTR…ANPA) and 74–84 (TTTTRRPGTTR). A compositionally biased stretch (basic and acidic residues) spans 102–111 (DDRNDLDGPK). An O-linked (Xyl...) (chondroitin sulfate) serine glycan is attached at S154. The chain crosses the membrane as a helical span at residues 162–182 (TIAGVASALAMALIGAVSSYI). Over 183–237 (SYQQKKFCFSIQQGLNADYVKGENLEAVVCEEPQVTYSKQETQSAEPPPPEPPRI) the chain is Cytoplasmic. The span at 218-227 (TYSKQETQSA) shows a compositional bias: polar residues. Residues 218 to 237 (TYSKQETQSAEPPPPEPPRI) are disordered. Residues 228–237 (EPPPPEPPRI) show a composition bias toward pro residues.

Belongs to the CD99 family. In terms of processing, O-glycosylated. Highly expressed in the nervous system, including brain, dentate nucleus of hippocampus, granular and Purkinje cells of cerebellum, brain stem nucleus and choroid plexus. Expressed in peripheral blood T- and B-cells and neutrophils (at protein level). Almost undetectable in bone marrow-derived neutrophils (at protein level). Also expressed in thymocytes (at protein level) with higher expression in cortical thymocytes than in medullary thymocytes. Expressed at high levels in testis (mostly in germ cells and Sertoli cells) and ovary (mostly in granulosa cells). Expressed in lung, heart, kidney and liver (at protein level); however, expression in heart, kidney and liver seems restricted to endothelial cells (at protein level). Highly expressed in endothelial cells and to a lower level in vascular smooth muscle cells (at protein level). Low expression in spleen.

The protein localises to the cell membrane. It localises to the cell junction. The protein resides in the secreted. In terms of biological role, plays a role in a late step of leukocyte extravasation helping cells to overcome the endothelial basement membrane. Acts at the same site as, but independently of, PECAM1. Homophilic adhesion molecule, but these interactions may not be required for cell aggregation. The polypeptide is CD99 antigen-like protein 2 (Cd99l2) (Mus musculus (Mouse)).